An 867-amino-acid chain; its full sequence is Putative RNA-directed RNA polymerase (867 aa).

Residues 561–676 (PVAIGVDASR…ITDRANEKLF (116 aa)) form the RdRp catalytic domain.

This sequence belongs to the luteoviruses RNA polymerase family.

It catalyses the reaction RNA(n) + a ribonucleoside 5'-triphosphate = RNA(n+1) + diphosphate. Functionally, probable polymerase. In Barley yellow dwarf virus (isolate MAV) (BYDV), this protein is Putative RNA-directed RNA polymerase.